Consider the following 581-residue polypeptide: NADH-quinone oxidoreductase subunit C/D (581 aa).

The NADH dehydrogenase I subunit C stretch occupies residues 1 to 172; it reads MSAVELVNEL…PPFVMTAARF (172 aa). The interval 196 to 581 is NADH dehydrogenase I subunit D; it reads ELMILNYGPH…IDYVMSDVDR (386 aa).

It in the N-terminal section; belongs to the complex I 30 kDa subunit family. The protein in the C-terminal section; belongs to the complex I 49 kDa subunit family. As to quaternary structure, NDH-1 is composed of 13 different subunits. Subunits NuoB, CD, E, F, and G constitute the peripheral sector of the complex.

Its subcellular location is the cell inner membrane. The catalysed reaction is a quinone + NADH + 5 H(+)(in) = a quinol + NAD(+) + 4 H(+)(out). NDH-1 shuttles electrons from NADH, via FMN and iron-sulfur (Fe-S) centers, to quinones in the respiratory chain. The immediate electron acceptor for the enzyme in this species is believed to be ubiquinone. Couples the redox reaction to proton translocation (for every two electrons transferred, four hydrogen ions are translocated across the cytoplasmic membrane), and thus conserves the redox energy in a proton gradient. The polypeptide is NADH-quinone oxidoreductase subunit C/D (Rhodopseudomonas palustris (strain BisB18)).